Consider the following 158-residue polypeptide: Ribosome maturation factor RimP (158 aa).

This sequence belongs to the RimP family.

It is found in the cytoplasm. Its function is as follows. Required for maturation of 30S ribosomal subunits. This Pseudomonas syringae pv. tomato (strain ATCC BAA-871 / DC3000) protein is Ribosome maturation factor RimP.